The sequence spans 640 residues: Threonine--tRNA ligase (640 aa).

The TGS domain maps to 1 to 61 (MPTITLPDGS…ENDASLQIIT (61 aa)). Residues 242–533 (DHRKIGKRLG…LIEHYEGAFP (292 aa)) are catalytic. Zn(2+)-binding residues include cysteine 333, histidine 384, and histidine 510.

It belongs to the class-II aminoacyl-tRNA synthetase family. Homodimer. Requires Zn(2+) as cofactor.

It localises to the cytoplasm. It catalyses the reaction tRNA(Thr) + L-threonine + ATP = L-threonyl-tRNA(Thr) + AMP + diphosphate + H(+). Its function is as follows. Catalyzes the attachment of threonine to tRNA(Thr) in a two-step reaction: L-threonine is first activated by ATP to form Thr-AMP and then transferred to the acceptor end of tRNA(Thr). Also edits incorrectly charged L-seryl-tRNA(Thr). In Pseudomonas savastanoi pv. phaseolicola (strain 1448A / Race 6) (Pseudomonas syringae pv. phaseolicola (strain 1448A / Race 6)), this protein is Threonine--tRNA ligase.